Reading from the N-terminus, the 30-residue chain is KIPCGESCVYIPCISSVLGCSCSNKVCYKD.

Residues 1–30 constitute a cross-link (cyclopeptide (Lys-Asp)); sequence KIPCGESCVYIPCISSVLGCSCSNKVCYKD. 3 disulfides stabilise this stretch: Cys-4–Cys-20, Cys-8–Cys-22, and Cys-13–Cys-27.

In terms of processing, this is a cyclic peptide. In terms of tissue distribution, detected in stems (at protein level).

In terms of biological role, probably participates in a plant defense mechanism. The sequence is that of Cyclotide hyen-H from Pigea enneasperma (Spade flower).